We begin with the raw amino-acid sequence, 390 residues long: Transforming growth factor beta-1 proprotein (390 aa).

Positions 1–29 are cleaved as a signal peptide; the sequence is MPPSGLRLLPLLLPLLWLLMLTPGRPVAG. The interval 30-74 is straightjacket domain; that stretch reads LSTCKTIDMELVKRKRIEAIRGQILSKLRLASPPSQGDVPPGPLP. Residues 75–271 form an arm domain region; sequence EAILALYNST…ATPLERAQHL (197 aa). Residues asparagine 82, asparagine 136, and asparagine 176 are each glycosylated (N-linked (GlcNAc...) asparagine). The bowtie tail stretch occupies residues 226–252; that stretch reads DSKDNTLQVDINGFSSGRRGDLATIHG. A Cell attachment site motif is present at residues 244–246; it reads RGD. 4 disulfide bridges follow: cysteine 285–cysteine 294, cysteine 293–cysteine 356, cysteine 322–cysteine 387, and cysteine 326–cysteine 389.

It belongs to the TGF-beta family. As to quaternary structure, homodimer; disulfide-linked. Interacts with the serine proteases, HTRA1 and HTRA3: the interaction with either inhibits TGFB1-mediated signaling and the HTRA protease activity is required for this inhibition. May interact with THSD4; this interaction may lead to sequestration by FBN1 microfibril assembly and attenuation of TGFB signaling. Interacts with CD109, DPT and ASPN. Interacts with EFEMP2. Interacts with TSKU; the interaction contributes to regulation of the hair cycle. Interacts with TGFBR3. In terms of assembly, homodimer; disulfide-linked. Interacts with transforming growth factor beta-1 (TGF-beta-1) chain; interaction is non-covalent and maintains TGF-beta-1 in a latent state; each latency-associated peptide (LAP) monomer interacts with TGF-beta-1 in the other monomer. Interacts with LTBP1; leading to regulation of TGF-beta-1 activation. Interacts with LRRC32/GARP; leading to regulation of TGF-beta-1 activation on the surface of activated regulatory T-cells (Tregs). Interacts with LRRC33/NRROS; leading to regulation of TGF-beta-1 activation in macrophages and microglia. Interacts (via cell attachment site) with integrins ITGAV and ITGB6 (ITGAV:ITGB6), leading to release of the active TGF-beta-1. Interacts with NREP; the interaction results in a decrease in TGFB1 autoinduction. Interacts with HSP90AB1; inhibits latent TGFB1 activation. Homodimer; disulfide-linked. Interacts with TGF-beta receptors (TGFBR1 and TGFBR2), leading to signal transduction. Interacts with EFEMP2. Transforming growth factor beta-1 proprotein: The precursor proprotein is cleaved in the Golgi apparatus by FURIN to form Transforming growth factor beta-1 (TGF-beta-1) and Latency-associated peptide (LAP) chains, which remain non-covalently linked, rendering TGF-beta-1 inactive. In terms of processing, N-glycosylated. Deglycosylation leads to activation of Transforming growth factor beta-1 (TGF-beta-1); mechanisms triggering deglycosylation-driven activation of TGF-beta-1 are however unclear.

It is found in the secreted. The protein localises to the extracellular space. It localises to the extracellular matrix. In terms of biological role, transforming growth factor beta-1 proprotein: Precursor of the Latency-associated peptide (LAP) and Transforming growth factor beta-1 (TGF-beta-1) chains, which constitute the regulatory and active subunit of TGF-beta-1, respectively. Functionally, required to maintain the Transforming growth factor beta-1 (TGF-beta-1) chain in a latent state during storage in extracellular matrix. Associates non-covalently with TGF-beta-1 and regulates its activation via interaction with 'milieu molecules', such as LTBP1, LRRC32/GARP and LRRC33/NRROS, that control activation of TGF-beta-1. Interaction with LRRC33/NRROS regulates activation of TGF-beta-1 in macrophages and microglia. Interaction with LRRC32/GARP controls activation of TGF-beta-1 on the surface of activated regulatory T-cells (Tregs). Interaction with integrins (ITGAV:ITGB6 or ITGAV:ITGB8) results in distortion of the Latency-associated peptide chain and subsequent release of the active TGF-beta-1. Multifunctional protein that regulates the growth and differentiation of various cell types and is involved in various processes, such as normal development, immune function, microglia function and responses to neurodegeneration. Activation into mature form follows different steps: following cleavage of the proprotein in the Golgi apparatus, Latency-associated peptide (LAP) and Transforming growth factor beta-1 (TGF-beta-1) chains remain non-covalently linked rendering TGF-beta-1 inactive during storage in extracellular matrix. At the same time, LAP chain interacts with 'milieu molecules', such as LTBP1, LRRC32/GARP and LRRC33/NRROS that control activation of TGF-beta-1 and maintain it in a latent state during storage in extracellular milieus. TGF-beta-1 is released from LAP by integrins (ITGAV:ITGB6 or ITGAV:ITGB8): integrin-binding to LAP stabilizes an alternative conformation of the LAP bowtie tail and results in distortion of the LAP chain and subsequent release of the active TGF-beta-1. Once activated following release of LAP, TGF-beta-1 acts by binding to TGF-beta receptors (TGFBR1 and TGFBR2), which transduce signal. While expressed by many cells types, TGF-beta-1 only has a very localized range of action within cell environment thanks to fine regulation of its activation by Latency-associated peptide chain (LAP) and 'milieu molecules'. Plays an important role in bone remodeling: acts as a potent stimulator of osteoblastic bone formation, causing chemotaxis, proliferation and differentiation in committed osteoblasts. Can promote either T-helper 17 cells (Th17) or regulatory T-cells (Treg) lineage differentiation in a concentration-dependent manner. At high concentrations, leads to FOXP3-mediated suppression of RORC and down-regulation of IL-17 expression, favoring Treg cell development. At low concentrations in concert with IL-6 and IL-21, leads to expression of the IL-17 and IL-23 receptors, favoring differentiation to Th17 cells. Stimulates sustained production of collagen through the activation of CREB3L1 by regulated intramembrane proteolysis (RIP). Mediates SMAD2/3 activation by inducing its phosphorylation and subsequent translocation to the nucleus. Positively regulates odontoblastic differentiation in dental papilla cells, via promotion of IPO7-mediated translocation of phosphorylated SMAD2 to the nucleus and subsequent transcription of target genes. Can induce epithelial-to-mesenchymal transition (EMT) and cell migration in various cell types. This chain is Transforming growth factor beta-1 proprotein (TGFB1), found in Bos taurus (Bovine).